The following is a 366-amino-acid chain: tRNA/tmRNA (uracil-C(5))-methyltransferase (366 aa).

S-adenosyl-L-methionine contacts are provided by glutamine 190, tyrosine 218, asparagine 223, glutamate 239, and aspartate 299. Cysteine 324 (nucleophile) is an active-site residue. The active-site Proton acceptor is glutamate 358.

It belongs to the class I-like SAM-binding methyltransferase superfamily. RNA M5U methyltransferase family. TrmA subfamily.

The catalysed reaction is uridine(54) in tRNA + S-adenosyl-L-methionine = 5-methyluridine(54) in tRNA + S-adenosyl-L-homocysteine + H(+). It catalyses the reaction uridine(341) in tmRNA + S-adenosyl-L-methionine = 5-methyluridine(341) in tmRNA + S-adenosyl-L-homocysteine + H(+). Its function is as follows. Dual-specificity methyltransferase that catalyzes the formation of 5-methyluridine at position 54 (m5U54) in all tRNAs, and that of position 341 (m5U341) in tmRNA (transfer-mRNA). This Salmonella heidelberg (strain SL476) protein is tRNA/tmRNA (uracil-C(5))-methyltransferase.